Here is a 336-residue protein sequence, read N- to C-terminus: HTH-type transcriptional regulator RafR (336 aa).

The 54-residue stretch at serine 2 to threonine 55 folds into the HTH lacI-type domain. A DNA-binding region (H-T-H motif) is located at residues leucine 3–glycine 22.

As to quaternary structure, homodimer.

In terms of biological role, repressor that negatively controls the expression of the raffinose (raf) operon by binding to the raf operator (rafO) DNA. Acts by binding to two operator sites, O1 and 02, which flank the -35 raf promoter box. RafR bound to 02 alone results in 45 % repression of transcription, whereas RafR bound to O1 leads to only 6% repression. This Escherichia coli protein is HTH-type transcriptional regulator RafR.